The primary structure comprises 631 residues: Vacuolar-sorting receptor 6 (631 aa).

A signal peptide spans 1-25 (MSLIHKGATLALFLALTMVVNGVFG). Topologically, residues 26–563 (RFIVEKSSVT…CIERSGSRIG (538 aa)) are lumenal. The 109-residue stretch at 57–165 (NYGGYMIGSV…SFANTLKQAL (109 aa)) folds into the PA domain. N-linked (GlcNAc...) asparagine glycans are attached at residues Asn-294 and Asn-431. 2 consecutive EGF-like domains span residues 413 to 463 (ETNE…TSCE) and 494 to 540 (ETSG…FECK). 5 disulfides stabilise this stretch: Cys-417–Cys-435, Cys-424–Cys-444, Cys-446–Cys-462, Cys-498–Cys-511, and Cys-530–Cys-539. The chain crosses the membrane as a helical span at residues 564-584 (WFPTFVILAAVASICVGGYVF). Residues 585–631 (YKYRLRSYMDSEIMAIMSQYMPLESQNTTDPMTGESQHQQLRLTSAA) lie on the Cytoplasmic side of the membrane. The short motif at 604–607 (YMPL) is the Tyrosine-based internalization motif element. A disordered region spans residues 610–631 (QNTTDPMTGESQHQQLRLTSAA).

The protein belongs to the VSR (BP-80) family. In terms of tissue distribution, expressed in seedlings, roots, leaves, flowers and siliques.

It is found in the membrane. The protein resides in the golgi apparatus membrane. It localises to the cytoplasmic vesicle. Its subcellular location is the clathrin-coated vesicle membrane. The protein localises to the prevacuolar compartment membrane. Functionally, vacuolar-sorting receptor (VSR) involved in clathrin-coated vesicles sorting from Golgi apparatus to vacuoles. This is Vacuolar-sorting receptor 6 (VSR6) from Arabidopsis thaliana (Mouse-ear cress).